Reading from the N-terminus, the 205-residue chain is Holliday junction branch migration complex subunit RuvA (205 aa).

A domain I region spans residues 1–64; that stretch reads MIGRLNGILV…EDAQLLFGFN (64 aa). A domain II region spans residues 65–143; it reads NKVERALFRE…NWGNDLFTPF (79 aa). The tract at residues 144–156 is flexible linker; it reads SDSAVIEPFSDAT. The segment at 157 to 205 is domain III; that stretch reads IANNAADDAVSALVSLGYKLPQAQKAVKSVSKPDMSTEVLIKESLKSML.

Belongs to the RuvA family. Homotetramer. Forms an RuvA(8)-RuvB(12)-Holliday junction (HJ) complex. HJ DNA is sandwiched between 2 RuvA tetramers; dsDNA enters through RuvA and exits via RuvB. An RuvB hexamer assembles on each DNA strand where it exits the tetramer. Each RuvB hexamer is contacted by two RuvA subunits (via domain III) on 2 adjacent RuvB subunits; this complex drives branch migration. In the full resolvosome a probable DNA-RuvA(4)-RuvB(12)-RuvC(2) complex forms which resolves the HJ.

The protein resides in the cytoplasm. Functionally, the RuvA-RuvB-RuvC complex processes Holliday junction (HJ) DNA during genetic recombination and DNA repair, while the RuvA-RuvB complex plays an important role in the rescue of blocked DNA replication forks via replication fork reversal (RFR). RuvA specifically binds to HJ cruciform DNA, conferring on it an open structure. The RuvB hexamer acts as an ATP-dependent pump, pulling dsDNA into and through the RuvAB complex. HJ branch migration allows RuvC to scan DNA until it finds its consensus sequence, where it cleaves and resolves the cruciform DNA. This Pseudoalteromonas translucida (strain TAC 125) protein is Holliday junction branch migration complex subunit RuvA.